The following is a 118-amino-acid chain: NADH-quinone oxidoreductase subunit A (118 aa).

Helical transmembrane passes span 5-25 (YLGISLFLAAGLIIPFLAFAV), 61-81 (FLYALVFVAFDVETVFLYPWA), and 90-110 (FAIVEMFIFITILVVGFWYAW).

Belongs to the complex I subunit 3 family. In terms of assembly, NDH-1 is composed of 14 different subunits. Subunits NuoA, H, J, K, L, M, N constitute the membrane sector of the complex.

The protein resides in the cell membrane. The catalysed reaction is a quinone + NADH + 5 H(+)(in) = a quinol + NAD(+) + 4 H(+)(out). In terms of biological role, NDH-1 shuttles electrons from NADH, via FMN and iron-sulfur (Fe-S) centers, to quinones in the respiratory chain. The immediate electron acceptor for the enzyme in this species is believed to be a menaquinone. Couples the redox reaction to proton translocation (for every two electrons transferred, four hydrogen ions are translocated across the cytoplasmic membrane), and thus conserves the redox energy in a proton gradient. The polypeptide is NADH-quinone oxidoreductase subunit A (Heliobacterium modesticaldum (strain ATCC 51547 / Ice1)).